Reading from the N-terminus, the 221-residue chain is Cytidylate kinase 1 (221 aa).

Gly-7–Ser-15 provides a ligand contact to ATP.

Belongs to the cytidylate kinase family. Type 1 subfamily.

Its subcellular location is the cytoplasm. The enzyme catalyses CMP + ATP = CDP + ADP. It catalyses the reaction dCMP + ATP = dCDP + ADP. The protein is Cytidylate kinase 1 of Borrelia garinii subsp. bavariensis (strain ATCC BAA-2496 / DSM 23469 / PBi) (Borreliella bavariensis).